Reading from the N-terminus, the 356-residue chain is Histidinol-phosphate aminotransferase (356 aa).

Residue Lys-214 is modified to N6-(pyridoxal phosphate)lysine.

Belongs to the class-II pyridoxal-phosphate-dependent aminotransferase family. Histidinol-phosphate aminotransferase subfamily. In terms of assembly, homodimer. Requires pyridoxal 5'-phosphate as cofactor.

The enzyme catalyses L-histidinol phosphate + 2-oxoglutarate = 3-(imidazol-4-yl)-2-oxopropyl phosphate + L-glutamate. It functions in the pathway amino-acid biosynthesis; L-histidine biosynthesis; L-histidine from 5-phospho-alpha-D-ribose 1-diphosphate: step 7/9. The polypeptide is Histidinol-phosphate aminotransferase (Shigella dysenteriae serotype 1 (strain Sd197)).